The chain runs to 401 residues: S-adenosylmethionine synthase (401 aa).

Residue 137–142 coordinates ATP; sequence GEGSGD. The tract at residues 272–305 is disordered; that stretch reads GTSAEQGDDGSVGRGNRSNGLITPNRSMSMEATS. The span at 287–305 shows a compositional bias: polar residues; sequence NRSNGLITPNRSMSMEATS.

Belongs to the AdoMet synthase 2 family. Requires Mg(2+) as cofactor.

It carries out the reaction L-methionine + ATP + H2O = S-adenosyl-L-methionine + phosphate + diphosphate. The protein operates within amino-acid biosynthesis; S-adenosyl-L-methionine biosynthesis; S-adenosyl-L-methionine from L-methionine: step 1/1. Functionally, catalyzes the formation of S-adenosylmethionine from methionine and ATP. The polypeptide is S-adenosylmethionine synthase (Natronomonas pharaonis (strain ATCC 35678 / DSM 2160 / CIP 103997 / JCM 8858 / NBRC 14720 / NCIMB 2260 / Gabara) (Halobacterium pharaonis)).